Here is a 192-residue protein sequence, read N- to C-terminus: Signal peptidase complex catalytic subunit SEC11C (192 aa).

Topologically, residues 1–28 are cytoplasmic; sequence MVRAGAVGTHLPTSSLDIFGDLRKMNKR. A helical; Signal-anchor for type II membrane protein membrane pass occupies residues 29–48; that stretch reads QLYYQVLNFAMIVSSALMIW. Topologically, residues 49–192 are lumenal; the sequence is KGLIVLTGSE…GAYVLLKRES (144 aa). Active-site charge relay system residues include S68, H108, and D134. Residues 177-188 form a C-terminal short (CTS) helix region; the sequence is ALLAVMGAYVLL.

It belongs to the peptidase S26B family. As to quaternary structure, component of the signal peptidase complex paralog C (SPC-C) composed of a catalytic subunit SEC11C and three accessory subunits SPCS1, SPCS2 and SPCS3. Within the complex, interacts with SPCS2 and SPCS3. The complex induces a local thinning of the ER membrane which is used to measure the length of the signal peptide (SP) h-region of protein substrates. This ensures the selectivity of the complex towards h-regions shorter than 18-20 amino acids. Post-translationally, may undergo processing at the N-terminus.

It localises to the endoplasmic reticulum membrane. It carries out the reaction Cleavage of hydrophobic, N-terminal signal or leader sequences from secreted and periplasmic proteins.. Catalytic component of the signal peptidase complex (SPC) which catalyzes the cleavage of N-terminal signal sequences from nascent proteins as they are translocated into the lumen of the endoplasmic reticulum. Specifically cleaves N-terminal signal peptides that contain a hydrophobic alpha-helix (h-region) shorter than 18-20 amino acids. The chain is Signal peptidase complex catalytic subunit SEC11C (Sec11c) from Mus musculus (Mouse).